The chain runs to 1014 residues: Probable sucrose-phosphate synthase 5 (1014 aa).

Composition is skewed to basic and acidic residues over residues 29-41 (RRLE…REAA) and 49-58 (EGEKDGKPDT). Disordered regions lie at residues 29–108 (RRLE…SDEE) and 648–677 (QLLR…SSEP).

It belongs to the glycosyltransferase 1 family. In terms of assembly, homodimer or homotetramer. In terms of tissue distribution, expressed in germinating seeds.

It carries out the reaction beta-D-fructose 6-phosphate + UDP-alpha-D-glucose = sucrose 6(F)-phosphate + UDP + H(+). It participates in glycan biosynthesis; sucrose biosynthesis; sucrose from D-fructose 6-phosphate and UDP-alpha-D-glucose: step 1/2. Activity is regulated by phosphorylation and moderated by concentration of metabolites and light. In terms of biological role, plays a role in photosynthetic sucrose synthesis by catalyzing the rate-limiting step of sucrose biosynthesis from UDP-glucose and fructose- 6-phosphate. Involved in the regulation of carbon partitioning in the leaves of plants. May regulate the synthesis of sucrose and therefore play a major role as a limiting factor in the export of photoassimilates out of the leaf. Plays a role for sucrose availability that is essential for plant growth and fiber elongation. The chain is Probable sucrose-phosphate synthase 5 (SPS5) from Oryza sativa subsp. japonica (Rice).